Consider the following 113-residue polypeptide: MNHYETVFILNPVLSETQVKETVSKFEDYLTSKGATMVSKEDWGLKKMAYEIQNKKSGFYHLFEFTVPGEVLIGFETEFRRDERVMRFLTVSLDKHAISWAERRRAKLKATKA.

It belongs to the bacterial ribosomal protein bS6 family.

Its function is as follows. Binds together with bS18 to 16S ribosomal RNA. This Flavobacterium psychrophilum (strain ATCC 49511 / DSM 21280 / CIP 103535 / JIP02/86) protein is Small ribosomal subunit protein bS6.